The following is a 129-amino-acid chain: Follitropin subunit beta (129 aa).

The N-terminal stretch at 1–20 (MKSLQFCFLFCCWKAICCNS) is a signal peptide. Intrachain disulfides connect Cys-21-Cys-69, Cys-35-Cys-84, Cys-38-Cys-122, Cys-46-Cys-100, Cys-50-Cys-102, and Cys-105-Cys-112. N-linked (GlcNAc...) asparagine glycans are attached at residues Asn-25 and Asn-42.

The protein belongs to the glycoprotein hormones subunit beta family. As to quaternary structure, heterodimer. The active follitropin is a heterodimer composed of an alpha chain/CGA shared with other hormones and a unique beta chain/FSHB shown here.

The protein localises to the secreted. Together with the alpha chain CGA constitutes follitropin, the follicle-stimulating hormone, and provides its biological specificity to the hormone heterodimer. Binds FSHR, a G protein-coupled receptor, on target cells to activate downstream signaling pathways. Follitropin is involved in follicle development and spermatogenesis in reproductive organs. In Sus scrofa (Pig), this protein is Follitropin subunit beta (FSHB).